The following is a 227-amino-acid chain: Myogenin (227 aa).

Residues Asp-82–Leu-133 form the bHLH domain. Positions Gln-147 to Ala-196 are disordered. The span at Ala-161 to Glu-175 shows a compositional bias: low complexity.

Homodimer and heterodimer. Efficient DNA binding requires dimerization with another bHLH protein.

It localises to the nucleus. Its function is as follows. Acts as a transcriptional activator that promotes transcription of muscle-specific target genes and plays a role in muscle differentiation. Induces fibroblasts to differentiate into myoblasts. Probable sequence specific DNA-binding protein. The protein is Myogenin (MYOG) of Gallus gallus (Chicken).